The sequence spans 495 residues: MGLTWKQRVFTALLGAAAVSGLTALLLVLVGTMNVLLPPDTKFGIVFDAGSSHTSLFVYQWPANKENDTGIVSQALACQAEGPGISSYASNPARVGESLQGCLEEALALIPKAKHHETPMFLGATAGMRLLSRKNRSQAEDVFAAVSRALGQSPVDFRGAELLTGQDEGAFGWITINYILGLLVKYSFSGEWIRPLEETLVGALDMGGASTQITFVPGGPILDKTAQATFRLYGADHTVYTHSYLCFGRDQALSRVLAELVQASTGLLIRHPCYHSGYRGTLALASLYESPCAPAAPPDLSQNLTVEGTGNPGACVEALRKLFNFSSCDGREDCAFAGVYQPPVQGQFYAFSNFYYTFNFLNLTSKPSLSGANATIWEFCLRPWKLVEASAPPGQDRWLRDYCASGLYILTLLVEGYGFSEETWGGIEFRQQAGGADIGWTLGYMLNLTNLIPAEAPAQGWAQSFGVWAAGVVFVVLTLAATLGAVAVQVFWLQD.

Residues Met-1–Arg-8 are Cytoplasmic-facing. The helical transmembrane segment at Val-9–Leu-29 threads the bilayer. At Val-30–Gly-466 the chain is on the extracellular side. Cys-78 and Cys-102 are oxidised to a cystine. Glu-168 functions as the Proton acceptor in the catalytic mechanism. A disulfide bridge connects residues Cys-246 and Cys-292. N-linked (GlcNAc...) asparagine glycans are attached at residues Asn-303 and Asn-324. Disulfide bonds link Cys-328–Cys-334 and Cys-380–Cys-403. Residues Val-467–Ala-487 form a helical membrane-spanning segment. Residues Val-488–Asp-495 are Cytoplasmic-facing.

The protein belongs to the GDA1/CD39 NTPase family. It depends on Ca(2+) as a cofactor. Mg(2+) serves as cofactor. In terms of processing, N-glycosylated.

It localises to the cell membrane. The enzyme catalyses a ribonucleoside 5'-triphosphate + 2 H2O = a ribonucleoside 5'-phosphate + 2 phosphate + 2 H(+). In terms of biological role, canalicular ectonucleoside NTPDase responsible for the main hepatic NTPDase activity. Ectonucleoside NTPDases catalyze the hydrolysis of gamma- and beta-phosphate residues of nucleotides, playing a central role in concentration of extracellular nucleotides. Has activity toward ATP, ADP, UTP and UDP, but not toward AMP. The polypeptide is Ectonucleoside triphosphate diphosphohydrolase 8 (ENTPD8) (Bos taurus (Bovine)).